The sequence spans 152 residues: Large ribosomal subunit protein bL34c (152 aa).

A chloroplast-targeting transit peptide spans 1 to 91 (MATLSLLSTG…DRCRRFVVRA (91 aa)).

As to quaternary structure, component of the chloroplast large ribosomal subunit (LSU). Mature 70S chloroplast ribosomes of higher plants consist of a small (30S) and a large (50S) subunit. The 30S small subunit contains 1 molecule of ribosomal RNA (16S rRNA) and 24 different proteins. The 50S large subunit contains 3 rRNA molecules (23S, 5S and 4.5S rRNA) and 33 different proteins.

Its subcellular location is the plastid. It is found in the chloroplast. Component of the chloroplast ribosome (chloro-ribosome), a dedicated translation machinery responsible for the synthesis of chloroplast genome-encoded proteins, including proteins of the transcription and translation machinery and components of the photosynthetic apparatus. The polypeptide is Large ribosomal subunit protein bL34c (RPL34) (Spinacia oleracea (Spinach)).